Reading from the N-terminus, the 327-residue chain is Porphobilinogen deaminase (327 aa).

An S-(dipyrrolylmethanemethyl)cysteine modification is found at cysteine 250.

It belongs to the HMBS family. In terms of assembly, monomer. It depends on dipyrromethane as a cofactor.

It carries out the reaction 4 porphobilinogen + H2O = hydroxymethylbilane + 4 NH4(+). Its pathway is porphyrin-containing compound metabolism; protoporphyrin-IX biosynthesis; coproporphyrinogen-III from 5-aminolevulinate: step 2/4. Functionally, tetrapolymerization of the monopyrrole PBG into the hydroxymethylbilane pre-uroporphyrinogen in several discrete steps. The protein is Porphobilinogen deaminase of Paraburkholderia phymatum (strain DSM 17167 / CIP 108236 / LMG 21445 / STM815) (Burkholderia phymatum).